We begin with the raw amino-acid sequence, 172 residues long: Bifunctional protein PyrR (172 aa).

Residues 90–102 carry the PRPP-binding motif; that stretch reads LVLIDDVLMSGRT.

The protein belongs to the purine/pyrimidine phosphoribosyltransferase family. PyrR subfamily.

It carries out the reaction UMP + diphosphate = 5-phospho-alpha-D-ribose 1-diphosphate + uracil. Functionally, regulates the transcription of the pyrimidine nucleotide (pyr) operon in response to exogenous pyrimidines. In terms of biological role, also displays a weak uracil phosphoribosyltransferase activity which is not physiologically significant. The polypeptide is Bifunctional protein PyrR (Pseudomonas putida (strain W619)).